A 569-amino-acid polypeptide reads, in one-letter code: Intraflagellar transport protein 74/72 (569 aa).

3 coiled-coil regions span residues 75–156 (ITAT…TRNE), 201–231 (YRSL…VAAN), and 271–298 (AITL…AESH).

Belongs to the IFT74 family.

The protein resides in the cell projection. Its subcellular location is the cilium. It is found in the flagellum. The protein localises to the cytoplasm. It localises to the cytoskeleton. The protein resides in the flagellum axoneme. Its subcellular location is the flagellum basal body. In terms of biological role, component of the intraflagellar transport complex B (IFT-B) involved in flagellar assembly. In Giardia intestinalis (strain ATCC 50803 / WB clone C6) (Giardia lamblia), this protein is Intraflagellar transport protein 74/72.